Consider the following 129-residue polypeptide: Dormancy-associated protein 2 (129 aa).

An N-terminal signal peptide occupies residues 1–25 (MDSRKAMLILGLLAMVLLISSEVSA). The disordered stretch occupies residues 110–129 (GGYHGGGGHGGHGGASNNGN).

Belongs to the DRM1/ARP family. Expressed in axilary buds. Detected in growing stems, leaflets and floral organs, but not in roots.

In Pisum sativum (Garden pea), this protein is Dormancy-associated protein 2.